A 360-amino-acid chain; its full sequence is Snurportin-1 (360 aa).

Met-1 carries the post-translational modification N-acetylmethionine. The segment at Met-1–Glu-42 is disordered. Residues Met-1 to Leu-65 are necessary for interaction with KPNB1 and m3G-cap U1 and U5 snRNP import receptor activity. The tract at residues Met-1–Gly-159 is necessary for interaction with XPO1. Residues Ala-7 to Ala-22 are compositionally biased toward polar residues. Residues Ser-11 to Met-73 enclose the IBB domain. Ser-75 bears the Phosphoserine mark. Residues Gly-127–Arg-129 are interaction with m3G-cap structure. Residues Met-208–Ala-328 form a necessary for binding to the m3G-cap structure region. The tract at residues Leu-339 to Asn-360 is disordered. Ser-350 carries the phosphoserine modification.

The protein belongs to the snurportin family. As to quaternary structure, component of an import snRNP complex composed of KPNB1, SNUPN, SMN1 and ZNF259. Component of a nuclear export receptor complex composed of KPNB1, Ran, SNUPN and XPO1. Found in a trimeric export complex with SNUPN, Ran and XPO1. Interacts (via IBB domain) with KPNB1; the interaction is direct. Interacts with DDX20, IPO7, SMN1, SNRPB and XPO1. Interacts directly with XPO1. Its interaction with XPO1 and binding to m3G-cap U snRNPs appears to be mutually exclusive. Can form homomers.

It localises to the nucleus. It is found in the cytoplasm. Functionally, functions as an U snRNP-specific nuclear import adapter. Involved in the trimethylguanosine (m3G)-cap-dependent nuclear import of U snRNPs. Binds specifically to the terminal m3G-cap U snRNAs. The sequence is that of Snurportin-1 (SNUPN) from Homo sapiens (Human).